A 24-amino-acid polypeptide reads, in one-letter code: Retinol-binding protein 3 (24 aa).

The protein resides in the secreted. Its subcellular location is the extracellular space. The protein localises to the extracellular matrix. It localises to the interphotoreceptor matrix. Functionally, IRBP shuttles 11-cis and all trans retinoids between the retinol isomerase in the pigment epithelium and the visual pigments in the photoreceptor cells of the retina. The chain is Retinol-binding protein 3 (RBP3) from Ovis aries (Sheep).